The primary structure comprises 608 residues: Glutamine--fructose-6-phosphate aminotransferase [isomerizing] (608 aa).

Cys2 serves as the catalytic Nucleophile; for GATase activity. The Glutamine amidotransferase type-2 domain maps to 2–218 (CGICGIVGHQ…DGDWCELTPD (217 aa)). 2 SIS domains span residues 284 to 423 (MPFD…ARGT) and 456 to 598 (MAAV…VDQP). Lys603 (for Fru-6P isomerization activity) is an active-site residue.

As to quaternary structure, homodimer.

The protein resides in the cytoplasm. The enzyme catalyses D-fructose 6-phosphate + L-glutamine = D-glucosamine 6-phosphate + L-glutamate. Functionally, catalyzes the first step in hexosamine metabolism, converting fructose-6P into glucosamine-6P using glutamine as a nitrogen source. The chain is Glutamine--fructose-6-phosphate aminotransferase [isomerizing] from Gluconobacter oxydans (strain 621H) (Gluconobacter suboxydans).